Consider the following 403-residue polypeptide: Phosphoglycerate kinase (403 aa).

Residues 22–24 (DLN), Arg-37, 60–63 (HLGR), Arg-119, and Arg-156 contribute to the substrate site. Residues Lys-206, Gly-302, Glu-333, and 359–362 (GGDS) each bind ATP.

The protein belongs to the phosphoglycerate kinase family. As to quaternary structure, monomer.

The protein localises to the cytoplasm. It catalyses the reaction (2R)-3-phosphoglycerate + ATP = (2R)-3-phospho-glyceroyl phosphate + ADP. It participates in carbohydrate degradation; glycolysis; pyruvate from D-glyceraldehyde 3-phosphate: step 2/5. The protein is Phosphoglycerate kinase of Streptomyces avermitilis (strain ATCC 31267 / DSM 46492 / JCM 5070 / NBRC 14893 / NCIMB 12804 / NRRL 8165 / MA-4680).